Reading from the N-terminus, the 149-residue chain is 3-dehydroquinate dehydratase (149 aa).

The active-site Proton acceptor is Y26. 3 residues coordinate substrate: N78, H84, and D91. H104 acts as the Proton donor in catalysis. Substrate-binding positions include 105-106 and R115; that span reads LS.

This sequence belongs to the type-II 3-dehydroquinase family. As to quaternary structure, homododecamer.

The catalysed reaction is 3-dehydroquinate = 3-dehydroshikimate + H2O. Its pathway is metabolic intermediate biosynthesis; chorismate biosynthesis; chorismate from D-erythrose 4-phosphate and phosphoenolpyruvate: step 3/7. In terms of biological role, catalyzes a trans-dehydration via an enolate intermediate. This Polynucleobacter asymbioticus (strain DSM 18221 / CIP 109841 / QLW-P1DMWA-1) (Polynucleobacter necessarius subsp. asymbioticus) protein is 3-dehydroquinate dehydratase.